The following is a 309-amino-acid chain: tRNA dimethylallyltransferase (309 aa).

11-18 (GPTASGKS) is a binding site for ATP. 13 to 18 (TASGKS) contributes to the substrate binding site. 2 interaction with substrate tRNA regions span residues 36–39 (DSMQ) and 160–164 (QRLLR).

This sequence belongs to the IPP transferase family. As to quaternary structure, monomer. The cofactor is Mg(2+).

The enzyme catalyses adenosine(37) in tRNA + dimethylallyl diphosphate = N(6)-dimethylallyladenosine(37) in tRNA + diphosphate. Its function is as follows. Catalyzes the transfer of a dimethylallyl group onto the adenine at position 37 in tRNAs that read codons beginning with uridine, leading to the formation of N6-(dimethylallyl)adenosine (i(6)A). This Caulobacter sp. (strain K31) protein is tRNA dimethylallyltransferase.